The primary structure comprises 509 residues: Lysine--tRNA ligase (509 aa).

Mg(2+) contacts are provided by Glu418 and Glu425.

The protein belongs to the class-II aminoacyl-tRNA synthetase family. Homodimer. The cofactor is Mg(2+).

Its subcellular location is the cytoplasm. The enzyme catalyses tRNA(Lys) + L-lysine + ATP = L-lysyl-tRNA(Lys) + AMP + diphosphate. This Acinetobacter baylyi (strain ATCC 33305 / BD413 / ADP1) protein is Lysine--tRNA ligase (lysS).